A 420-amino-acid polypeptide reads, in one-letter code: Serine hydroxymethyltransferase (420 aa).

(6S)-5,6,7,8-tetrahydrofolate contacts are provided by residues Leu-121 and 125–127; that span reads GHL. At Lys-230 the chain carries N6-(pyridoxal phosphate)lysine. 355-357 is a binding site for (6S)-5,6,7,8-tetrahydrofolate; it reads SPF.

It belongs to the SHMT family. In terms of assembly, homodimer. It depends on pyridoxal 5'-phosphate as a cofactor.

It localises to the cytoplasm. The enzyme catalyses (6R)-5,10-methylene-5,6,7,8-tetrahydrofolate + glycine + H2O = (6S)-5,6,7,8-tetrahydrofolate + L-serine. It functions in the pathway one-carbon metabolism; tetrahydrofolate interconversion. It participates in amino-acid biosynthesis; glycine biosynthesis; glycine from L-serine: step 1/1. Catalyzes the reversible interconversion of serine and glycine with tetrahydrofolate (THF) serving as the one-carbon carrier. This reaction serves as the major source of one-carbon groups required for the biosynthesis of purines, thymidylate, methionine, and other important biomolecules. Also exhibits THF-independent aldolase activity toward beta-hydroxyamino acids, producing glycine and aldehydes, via a retro-aldol mechanism. The sequence is that of Serine hydroxymethyltransferase from Streptococcus mutans serotype c (strain ATCC 700610 / UA159).